A 117-amino-acid chain; its full sequence is Large ribosomal subunit protein uL22 (117 aa).

It belongs to the universal ribosomal protein uL22 family. In terms of assembly, part of the 50S ribosomal subunit.

Functionally, this protein binds specifically to 23S rRNA; its binding is stimulated by other ribosomal proteins, e.g. L4, L17, and L20. It is important during the early stages of 50S assembly. It makes multiple contacts with different domains of the 23S rRNA in the assembled 50S subunit and ribosome. The globular domain of the protein is located near the polypeptide exit tunnel on the outside of the subunit, while an extended beta-hairpin is found that lines the wall of the exit tunnel in the center of the 70S ribosome. In Lactobacillus helveticus (strain DPC 4571), this protein is Large ribosomal subunit protein uL22.